A 395-amino-acid polypeptide reads, in one-letter code: 1-deoxy-D-xylulose 5-phosphate reductoisomerase (395 aa).

NADPH-binding residues include T13, G14, S15, I16, K40, and N127. A 1-deoxy-D-xylulose 5-phosphate-binding site is contributed by K128. Residue E129 coordinates NADPH. D153 serves as a coordination point for Mn(2+). Residues S154, E155, S184, and H207 each coordinate 1-deoxy-D-xylulose 5-phosphate. A Mn(2+)-binding site is contributed by E155. G213 contacts NADPH. 4 residues coordinate 1-deoxy-D-xylulose 5-phosphate: S220, N225, K226, and E229. E229 provides a ligand contact to Mn(2+).

Belongs to the DXR family. The cofactor is Mg(2+). It depends on Mn(2+) as a cofactor.

It catalyses the reaction 2-C-methyl-D-erythritol 4-phosphate + NADP(+) = 1-deoxy-D-xylulose 5-phosphate + NADPH + H(+). Its pathway is isoprenoid biosynthesis; isopentenyl diphosphate biosynthesis via DXP pathway; isopentenyl diphosphate from 1-deoxy-D-xylulose 5-phosphate: step 1/6. Functionally, catalyzes the NADPH-dependent rearrangement and reduction of 1-deoxy-D-xylulose-5-phosphate (DXP) to 2-C-methyl-D-erythritol 4-phosphate (MEP). The sequence is that of 1-deoxy-D-xylulose 5-phosphate reductoisomerase from Nitrosospira multiformis (strain ATCC 25196 / NCIMB 11849 / C 71).